Here is a 279-residue protein sequence, read N- to C-terminus: Digeranylgeranylglyceryl phosphate synthase (279 aa).

The next 6 membrane-spanning stretches (helical) occupy residues 27 to 47, 90 to 110, 127 to 147, 199 to 219, 222 to 242, and 259 to 279; these read LIAT…VALI, FVGG…IAII, VLGN…GGAF, TGIF…LPFG, WGLF…FGAF, and TSIL…AAVI.

Belongs to the UbiA prenyltransferase family. DGGGP synthase subfamily. Mg(2+) is required as a cofactor.

It is found in the cell membrane. It carries out the reaction sn-3-O-(geranylgeranyl)glycerol 1-phosphate + (2E,6E,10E)-geranylgeranyl diphosphate = 2,3-bis-O-(geranylgeranyl)-sn-glycerol 1-phosphate + diphosphate. The protein operates within membrane lipid metabolism; glycerophospholipid metabolism. Functionally, prenyltransferase that catalyzes the transfer of the geranylgeranyl moiety of geranylgeranyl diphosphate (GGPP) to the C2 hydroxyl of (S)-3-O-geranylgeranylglyceryl phosphate (GGGP). This reaction is the second ether-bond-formation step in the biosynthesis of archaeal membrane lipids. The chain is Digeranylgeranylglyceryl phosphate synthase from Methanoculleus marisnigri (strain ATCC 35101 / DSM 1498 / JR1).